The chain runs to 243 residues: Coproheme decarboxylase (243 aa).

Residue Tyr-145 is part of the active site. His-168 contacts Fe-coproporphyrin III.

It belongs to the ChdC family. Type 2 subfamily. The cofactor is Fe-coproporphyrin III.

It carries out the reaction Fe-coproporphyrin III + 2 H2O2 + 2 H(+) = heme b + 2 CO2 + 4 H2O. The catalysed reaction is Fe-coproporphyrin III + H2O2 + H(+) = harderoheme III + CO2 + 2 H2O. It catalyses the reaction harderoheme III + H2O2 + H(+) = heme b + CO2 + 2 H2O. It functions in the pathway porphyrin-containing compound metabolism; protoheme biosynthesis. Its function is as follows. Involved in coproporphyrin-dependent heme b biosynthesis. Catalyzes the decarboxylation of Fe-coproporphyrin III (coproheme) to heme b (protoheme IX), the last step of the pathway. The reaction occurs in a stepwise manner with a three-propionate intermediate. This chain is Coproheme decarboxylase, found in Streptomyces coelicolor (strain ATCC BAA-471 / A3(2) / M145).